A 223-amino-acid polypeptide reads, in one-letter code: Glutathione S-transferase alpha I (223 aa).

Position 1 is an N-acetylmethionine (Met1). Ala2 carries the N-acetylalanine; in Glutathione S-transferase alpha I, N-terminally processed modification. Residues 3–83 (RKPLLHYFNG…YVANKHNLYG (81 aa)) form the GST N-terminal domain. An N6-succinyllysine modification is found at Lys4. Glutathione is bound by residues Tyr9, Arg45, 54-55 (QV), and 67-68 (QT). Positions 85–208 (DMKERALIDM…QPGSQRKPPM (124 aa)) constitute a GST C-terminal domain.

This sequence belongs to the GST superfamily. Alpha family. As to quaternary structure, homodimer or heterodimer of GSTA1 and GSTA2. As to expression, liver and lung.

It localises to the cytoplasm. The catalysed reaction is RX + glutathione = an S-substituted glutathione + a halide anion + H(+). It catalyses the reaction prostaglandin A2 + glutathione = prostaglandin A2-S-(R)-glutathione. It carries out the reaction prostaglandin J2 + glutathione = prostaglandin J2-S-(R)-glutathione. The enzyme catalyses (13S)-hydroperoxy-(9Z,11E)-octadecadienoate + 2 glutathione = (13S)-hydroxy-(9Z,11E)-octadecadienoate + glutathione disulfide + H2O. The catalysed reaction is androst-5-ene-3,17-dione = androst-4-ene-3,17-dione. In terms of biological role, glutathione S-transferase that catalyzes the nucleophilic attack of the sulfur atom of glutathione on the electrophilic groups of a wide range of exogenous and endogenous compounds. Involved in the formation of glutathione conjugates of both prostaglandin A2 (PGA2) and prostaglandin J2 (PGJ2). It also catalyzes the isomerization of D5-androstene-3,17-dione (AD) into D4-androstene-3,17-dione and may therefore play an important role in hormone biosynthesis. Through its glutathione-dependent peroxidase activity toward the fatty acid hydroperoxide (13S)-hydroperoxy-(9Z,11E)-octadecadienoate/13-HPODE it is also involved in the metabolism of oxidized linoleic acid. In Oryctolagus cuniculus (Rabbit), this protein is Glutathione S-transferase alpha I.